The following is a 149-amino-acid chain: Transcriptional repressor NrdR (149 aa).

A zinc finger lies at 3 to 34 (CPFCGNLETQVVETRVSEDADFIRRRRQCGAC). Residues 49 to 139 (PAIVKKDGRR…VYRSFEDIDE (91 aa)) form the ATP-cone domain.

This sequence belongs to the NrdR family. The cofactor is Zn(2+).

Its function is as follows. Negatively regulates transcription of bacterial ribonucleotide reductase nrd genes and operons by binding to NrdR-boxes. This chain is Transcriptional repressor NrdR, found in Polaromonas sp. (strain JS666 / ATCC BAA-500).